A 223-amino-acid polypeptide reads, in one-letter code: Deoxyribose-phosphate aldolase (223 aa).

Residue Asp-91 is the Proton donor/acceptor of the active site. Lys-153 acts as the Schiff-base intermediate with acetaldehyde in catalysis. The active-site Proton donor/acceptor is Lys-182.

This sequence belongs to the DeoC/FbaB aldolase family. DeoC type 1 subfamily.

The protein localises to the cytoplasm. The catalysed reaction is 2-deoxy-D-ribose 5-phosphate = D-glyceraldehyde 3-phosphate + acetaldehyde. It functions in the pathway carbohydrate degradation; 2-deoxy-D-ribose 1-phosphate degradation; D-glyceraldehyde 3-phosphate and acetaldehyde from 2-deoxy-alpha-D-ribose 1-phosphate: step 2/2. In terms of biological role, catalyzes a reversible aldol reaction between acetaldehyde and D-glyceraldehyde 3-phosphate to generate 2-deoxy-D-ribose 5-phosphate. The protein is Deoxyribose-phosphate aldolase of Yersinia enterocolitica serotype O:8 / biotype 1B (strain NCTC 13174 / 8081).